Consider the following 89-residue polypeptide: DNA/RNA-binding protein Alba (89 aa).

N6-acetyllysine is present on Lys-11.

It belongs to the histone-like Alba family. Acetylated. Acetylation at Lys-11 decreases DNA-binding affinity.

The protein localises to the cytoplasm. The protein resides in the chromosome. Binds double-stranded DNA tightly but without sequence specificity. Involved in DNA compaction. This is DNA/RNA-binding protein Alba from Thermoplasma volcanium (strain ATCC 51530 / DSM 4299 / JCM 9571 / NBRC 15438 / GSS1).